The following is a 120-amino-acid chain: MFASTEIRLTFCQDRPEPREDDSYGVVVQESKPALKVPPMYKVVMFNDDYTPMDFVVEVLEKFFNLNRELATKVMLTVHTEGRAVCGMFTRDVAETKAMQVNQYARECQHPLLCEIEKDG.

This sequence belongs to the ClpS family. In terms of assembly, binds to the N-terminal domain of the chaperone ClpA.

Involved in the modulation of the specificity of the ClpAP-mediated ATP-dependent protein degradation. In Azotobacter vinelandii (strain DJ / ATCC BAA-1303), this protein is ATP-dependent Clp protease adapter protein ClpS.